Consider the following 584-residue polypeptide: Cytochrome c oxidase subunit 1 (584 aa).

The segment at methionine 1–lysine 25 is disordered. A helical membrane pass occupies residues isoleucine 43–isoleucine 63. Residue histidine 87 participates in Fe(II)-heme a binding. 6 consecutive transmembrane segments (helical) span residues valine 90–leucine 110, leucine 122–leucine 142, methionine 171–leucine 191, isoleucine 214–glycine 234, leucine 259–valine 279, and phenylalanine 292–tryptophan 312. Positions 265 and 269 each coordinate Cu cation. Residues histidine 265 to tyrosine 269 constitute a cross-link (1'-histidyl-3'-tyrosine (His-Tyr)). Histidine 314 and histidine 315 together coordinate Cu cation. The next 2 helical transmembrane spans lie at methionine 316 to valine 336 and methionine 360 to leucine 380. Histidine 398 lines the heme a3 pocket. The next 3 helical transmembrane spans lie at phenylalanine 399 to phenylalanine 419, isoleucine 434 to glycine 454, and isoleucine 477 to phenylalanine 497. Residue histidine 400 coordinates Fe(II)-heme a. Positions histidine 564–arginine 584 are disordered.

As to quaternary structure, associates with subunits II, III and IV to form cytochrome c oxidase. The 4 subunit cytochrome c oxidase forms a supercomplex with the menaquinol-cytochrome c reductase complex (cytochrome bc1). Requires Cu(2+) as cofactor. It depends on heme as a cofactor.

Its subcellular location is the cell membrane. The catalysed reaction is 4 Fe(II)-[cytochrome c] + O2 + 8 H(+)(in) = 4 Fe(III)-[cytochrome c] + 2 H2O + 4 H(+)(out). It participates in energy metabolism; oxidative phosphorylation. Cytochrome c oxidase is the component of the respiratory chain that catalyzes the reduction of oxygen to water. Subunits 1-3 form the functional core of the enzyme complex. CO I is the catalytic subunit of the enzyme. Electrons originating in cytochrome c are transferred via the copper A center of subunit 2 and heme A of subunit 1 to the bimetallic center formed by heme A3 and copper B. The polypeptide is Cytochrome c oxidase subunit 1 (ctaD) (Corynebacterium glutamicum (strain ATCC 13032 / DSM 20300 / JCM 1318 / BCRC 11384 / CCUG 27702 / LMG 3730 / NBRC 12168 / NCIMB 10025 / NRRL B-2784 / 534)).